The following is a 2543-amino-acid chain: Highly reducing polyketide synthase GPY1 (2543 aa).

A Ketosynthase family 3 (KS3) domain is found at arginine 9–phenylalanine 435. Catalysis depends on for beta-ketoacyl synthase activity residues cysteine 182, histidine 318, and histidine 358. The tract at residues threonine 574 to alanine 881 is malonyl-CoA:ACP transacylase (MAT) domain. The N-terminal hotdog fold stretch occupies residues histidine 953 to lysine 1089. The tract at residues histidine 953–aspartate 1253 is dehydratase (DH) domain. In terms of domain architecture, PKS/mFAS DH spans histidine 953–threonine 1256. Histidine 985 functions as the Proton acceptor; for dehydratase activity in the catalytic mechanism. The tract at residues methionine 1103–threonine 1256 is C-terminal hotdog fold. Catalysis depends on aspartate 1169, which acts as the Proton donor; for dehydratase activity. Residues asparagine 1399–alanine 1587 form a methyltransferase (CMet) domain region. Residues glycine 1830–valine 2136 are enoyl reductase (ER) domain. A ketoreductase (KR) domain region spans residues threonine 2161 to glutamate 2335. Residues alanine 2464–isoleucine 2541 enclose the Carrier domain. Serine 2501 carries the post-translational modification O-(pantetheine 4'-phosphoryl)serine.

Functionally, highly reducing polyketide synthase; part of the gene cluster that mediates the biosynthesis of gibepyrone A, a 2H-pyran-2-one metabolite exhibiting a moderate antimicrobial activity against Gram-positive bacteria and yeasts. The highly reducing polyketide synthase GPY1 is sufficient to produce gibepyrone A. GPY1 uses an acetyl-CoA starter unit, three malonyl-CoA extender units, and two SAM-dependent methylations to establish the gibepyrone A carbon backbone, followed by product release upon intramolecular cyclization. The gibepyrone A derivatives gibepyrones B and D are produced by cluster-independent P450 monooxygenases, probably to protect the fungus from the toxic product. In contrast, the formation of gibepyrones E and F from gibepyrone A is a spontaneous process and independent of enzymatic activity. This Gibberella fujikuroi (strain CBS 195.34 / IMI 58289 / NRRL A-6831) (Bakanae and foot rot disease fungus) protein is Highly reducing polyketide synthase GPY1.